The primary structure comprises 207 residues: M-zodatoxin-Lt4a (207 aa).

An N-terminal signal peptide occupies residues 1 to 22 (MKFSIIALALAVAFVCVAESRS). Residues 23-43 (EEEGYDVSEEIQAEELEEAER) constitute a propeptide that is removed on maturation. Positions 40 to 43 (EAER) match the Processing quadruplet motif 1 motif. The residue at position 61 (Gln-61) is a Glutamine amide. The Inverted processing quadruplet motif 1 signature appears at 63–66 (REDS). Positions 63-71 (REDSEEAGR) are excised as a propeptide. Residues 68 to 71 (EAGR) carry the Processing quadruplet motif 2 motif. Residue Gln-89 is modified to Glutamine amide. The Inverted processing quadruplet motif 2 motif lies at 91–94 (REDS). Residues 91-99 (REDSEEAGR) constitute a propeptide that is removed on maturation. Positions 96–99 (EAGR) match the Processing quadruplet motif 3 motif. A Glutamine amide modification is found at Gln-117. The short motif at 119–122 (REDS) is the Inverted processing quadruplet motif 3 element. A propeptide spanning residues 119–127 (REDSEEAGR) is cleaved from the precursor. Positions 124 to 127 (EAGR) match the Processing quadruplet motif 4 motif. The residue at position 145 (Gln-145) is a Glutamine amide. The short motif at 147 to 150 (REDS) is the Inverted processing quadruplet motif 4 element. Positions 147-155 (REDSEEAGR) are excised as a propeptide. Positions 152-155 (EAGR) match the Processing quadruplet motif 5 motif. Gln-173 carries the glutamine amide modification. An Inverted processing quadruplet motif 5 motif is present at residues 175–178 (REDT). Positions 175–182 (REDTEEAR) are excised as a propeptide. A Processing quadruplet motif 6 motif is present at residues 179-182 (EEAR). The residue at position 206 (Phe-206) is a Phenylalanine amide.

It belongs to the cationic peptide 03 (latarcin) family. 04 subfamily. Post-translationally, cleavage of the propeptide depends on the processing quadruplet motif (PQM) (XXXR, with at least one of X being E) and the inverted PQM (RXXX, with at least one of X being E). As to expression, expressed by the venom gland.

Its subcellular location is the secreted. M-zodatoxin-Lt4a: Has antimicrobial activity against Gram-positive bacteria (A.globiformis VKM Ac-1112 (MIC=0.3 uM), and B.subtilis VKM B-501 (MIC=1.1 uM)), Gram-negative bacteria (E.coli DH5-alpha (MIC=4.5 uM), E.coli MH1 (MIC=3.2 uM), and P.aeruginosa PAO1 (MIC&gt;35 uM)), and yeasts (P.pastoris GS115 (MIC=36 uM), and S.cerevisiae Y190 (MIC=18 uM)). Does not have hemolytic activity against rabbit erythrocytes. Causes paralysis, but is not lethal when injected into insect (M.domestica) larvae. Functionally, shows no antimicrobial activity against Gram-positive bacterium B.subtilis B-501 or Gram-negative bacterium E.coli DH5-alpha at concentrations up to 20 uM. In terms of biological role, shows no antimicrobial activity against Gram-positive bacterium B.subtilis B-501 or Gram-negative bacterium E.coli DH5-alpha at concentrations up to 20 uM. Shows no toxicity towards insect (S.carnaria) larvae. In Lachesana tarabaevi (Spider), this protein is M-zodatoxin-Lt4a.